Here is a 73-residue protein sequence, read N- to C-terminus: Large ribosomal subunit protein bL28 (73 aa).

Belongs to the bacterial ribosomal protein bL28 family.

In Buchnera aphidicola subsp. Cinara cedri (strain Cc), this protein is Large ribosomal subunit protein bL28.